Reading from the N-terminus, the 203-residue chain is Ras-like protein family member 10B (203 aa).

The tract at residues 1–203 (MVSTYRVAVL…ALRRNRCAIM (203 aa)) is small GTPase-like. GTP is bound at residue 11-18 (GARGVGKS). Positions 33–42 (CVPTTARRLY) match the Effector region motif. Residues 59–62 (DFPP) and 128–131 (NKRD) contribute to the GTP site. C200 carries the post-translational modification Cysteine methyl ester. Residue C200 is the site of S-geranylgeranyl cysteine attachment. The propeptide at 201–203 (AIM) is removed in mature form.

Belongs to the small GTPase superfamily. Ras family. Interacts with CADPS. Expressed at high levels in skeletal muscle and, at much lower levels, in heart, brain and pancreas.

The protein resides in the cell membrane. The catalysed reaction is GTP + H2O = GDP + phosphate + H(+). Functionally, may facilitate the release of atrial natriuretic peptide by cardiomyocytes and hence play a role in the regulation of arterial pressure. This Homo sapiens (Human) protein is Ras-like protein family member 10B (RASL10B).